The primary structure comprises 229 residues: 7-cyano-7-deazaguanine synthase (229 aa).

9 to 19 (LSGGLDSATVL) lines the ATP pocket. Zn(2+) is bound by residues C188, C198, C201, and C204.

It belongs to the QueC family. Zn(2+) is required as a cofactor.

It carries out the reaction 7-carboxy-7-deazaguanine + NH4(+) + ATP = 7-cyano-7-deazaguanine + ADP + phosphate + H2O + H(+). The protein operates within purine metabolism; 7-cyano-7-deazaguanine biosynthesis. Its function is as follows. Catalyzes the ATP-dependent conversion of 7-carboxy-7-deazaguanine (CDG) to 7-cyano-7-deazaguanine (preQ(0)). In Methylobacillus flagellatus (strain ATCC 51484 / DSM 6875 / VKM B-1610 / KT), this protein is 7-cyano-7-deazaguanine synthase.